We begin with the raw amino-acid sequence, 391 residues long: Ferrochelatase (391 aa).

Fe cation contacts are provided by His-196 and Glu-281.

Belongs to the ferrochelatase family.

It localises to the cytoplasm. The catalysed reaction is heme b + 2 H(+) = protoporphyrin IX + Fe(2+). Its pathway is porphyrin-containing compound metabolism; protoheme biosynthesis; protoheme from protoporphyrin-IX: step 1/1. Catalyzes the ferrous insertion into protoporphyrin IX. In Prochlorococcus marinus (strain SARG / CCMP1375 / SS120), this protein is Ferrochelatase.